Reading from the N-terminus, the 122-residue chain is Large ribosomal subunit protein uL14 (122 aa).

This sequence belongs to the universal ribosomal protein uL14 family. As to quaternary structure, part of the 50S ribosomal subunit. Forms a cluster with proteins L3 and L19. In the 70S ribosome, L14 and L19 interact and together make contacts with the 16S rRNA in bridges B5 and B8.

Binds to 23S rRNA. Forms part of two intersubunit bridges in the 70S ribosome. This is Large ribosomal subunit protein uL14 from Rhodospirillum centenum (strain ATCC 51521 / SW).